Here is a 447-residue protein sequence, read N- to C-terminus: Asparagine--tRNA ligase (447 aa).

This sequence belongs to the class-II aminoacyl-tRNA synthetase family. Homodimer.

It localises to the cytoplasm. It carries out the reaction tRNA(Asn) + L-asparagine + ATP = L-asparaginyl-tRNA(Asn) + AMP + diphosphate + H(+). In Streptococcus pneumoniae (strain ATCC BAA-255 / R6), this protein is Asparagine--tRNA ligase.